Consider the following 699-residue polypeptide: Elongation factor G (699 aa).

A tr-type G domain is found at 8–288 (EDYRNFGIMA…AVVDYLPSPV (281 aa)). GTP-binding positions include 17-24 (AHIDAGKT), 86-90 (DTPGH), and 140-143 (NKMD).

It belongs to the TRAFAC class translation factor GTPase superfamily. Classic translation factor GTPase family. EF-G/EF-2 subfamily.

It is found in the cytoplasm. In terms of biological role, catalyzes the GTP-dependent ribosomal translocation step during translation elongation. During this step, the ribosome changes from the pre-translocational (PRE) to the post-translocational (POST) state as the newly formed A-site-bound peptidyl-tRNA and P-site-bound deacylated tRNA move to the P and E sites, respectively. Catalyzes the coordinated movement of the two tRNA molecules, the mRNA and conformational changes in the ribosome. In Sinorhizobium medicae (strain WSM419) (Ensifer medicae), this protein is Elongation factor G.